We begin with the raw amino-acid sequence, 241 residues long: Octanoyltransferase (241 aa).

A BPL/LPL catalytic domain is found at 38 to 227 (AGGPDTLLLL…AVCNALDGAL (190 aa)). Substrate-binding positions include 85-92 (RGGKITWH), 157-159 (AIG), and 170-172 (GFA). Cys-188 serves as the catalytic Acyl-thioester intermediate.

Belongs to the LipB family.

It localises to the cytoplasm. It catalyses the reaction octanoyl-[ACP] + L-lysyl-[protein] = N(6)-octanoyl-L-lysyl-[protein] + holo-[ACP] + H(+). It participates in protein modification; protein lipoylation via endogenous pathway; protein N(6)-(lipoyl)lysine from octanoyl-[acyl-carrier-protein]: step 1/2. Functionally, catalyzes the transfer of endogenously produced octanoic acid from octanoyl-acyl-carrier-protein onto the lipoyl domains of lipoate-dependent enzymes. Lipoyl-ACP can also act as a substrate although octanoyl-ACP is likely to be the physiological substrate. The sequence is that of Octanoyltransferase from Mycobacterium marinum (strain ATCC BAA-535 / M).